The following is a 372-amino-acid chain: NAD(P)H-quinone oxidoreductase subunit 1 (372 aa).

8 helical membrane passes run 27–47 (AIWM…GVLV), 97–117 (WLFL…YLIV), 130–150 (VGIF…LMAG), 176–196 (LALS…IDIV), 204–224 (ILGW…IAAL), 254–274 (FALF…VFAV), 308–328 (SLGI…AILL), and 351–371 (VSLV…FAFG).

This sequence belongs to the complex I subunit 1 family. As to quaternary structure, NDH-1 is composed of at least 11 different subunits.

It localises to the cellular thylakoid membrane. The catalysed reaction is a plastoquinone + NADH + (n+1) H(+)(in) = a plastoquinol + NAD(+) + n H(+)(out). The enzyme catalyses a plastoquinone + NADPH + (n+1) H(+)(in) = a plastoquinol + NADP(+) + n H(+)(out). Its function is as follows. NDH-1 shuttles electrons from an unknown electron donor, via FMN and iron-sulfur (Fe-S) centers, to quinones in the respiratory and/or the photosynthetic chain. The immediate electron acceptor for the enzyme in this species is believed to be plastoquinone. Couples the redox reaction to proton translocation, and thus conserves the redox energy in a proton gradient. The polypeptide is NAD(P)H-quinone oxidoreductase subunit 1 (Microcystis aeruginosa (strain NIES-843 / IAM M-2473)).